Consider the following 377-residue polypeptide: Peptide chain release factor 2 (377 aa).

Q257 is subject to N5-methylglutamine.

The protein belongs to the prokaryotic/mitochondrial release factor family. Post-translationally, methylated by PrmC. Methylation increases the termination efficiency of RF2.

Its subcellular location is the cytoplasm. Peptide chain release factor 2 directs the termination of translation in response to the peptide chain termination codons UGA and UAA. The sequence is that of Peptide chain release factor 2 from Lactiplantibacillus plantarum (strain ATCC BAA-793 / NCIMB 8826 / WCFS1) (Lactobacillus plantarum).